We begin with the raw amino-acid sequence, 372 residues long: Peptidyl-prolyl cis-trans isomerase D (372 aa).

Residues 10–173 form the PPIase cyclophilin-type domain; that stretch reads FFDIQIGQQQ…TDVTIAECGE (164 aa). The tract at residues 174–193 is disordered; sequence LTGEDYDNADKQTPDATGDP. 3 TPR repeats span residues 215–248, 268–304, and 309–342; these read ASEL…LNEF, FTLH…ASAK, and AKVY…APSD.

It belongs to the cyclophilin-type PPIase family. PPIase D subfamily.

The protein resides in the cytoplasm. The catalysed reaction is [protein]-peptidylproline (omega=180) = [protein]-peptidylproline (omega=0). PPIases accelerate the folding of proteins. It catalyzes the cis-trans isomerization of proline imidic peptide bonds in oligopeptides. The polypeptide is Peptidyl-prolyl cis-trans isomerase D (cpr6) (Emericella nidulans (strain FGSC A4 / ATCC 38163 / CBS 112.46 / NRRL 194 / M139) (Aspergillus nidulans)).